Here is a 48-residue protein sequence, read N- to C-terminus: Sperm protamine P1 (48 aa).

This sequence belongs to the protamine P1 family. In terms of assembly, cross-linked by interchain disulfide bonds around the DNA-helix. As to expression, testis.

The protein resides in the nucleus. It localises to the chromosome. Its function is as follows. Protamines substitute for histones in the chromatin of sperm during the haploid phase of spermatogenesis. They compact sperm DNA into a highly condensed, stable and inactive complex. This Cavia porcellus (Guinea pig) protein is Sperm protamine P1 (PRM1).